Reading from the N-terminus, the 166-residue chain is MSQFWYSEETASRLAEELLQQAGEHGRIACLSAPSVYQKLKQLESVRSDGVSAVLLEFDRRFAAYGDEFVFYDYNNPLCLPEDLLPQSFDIVIADPPYLSEECLSKVTLTVKHLTKGKILLCTGAIMEEHAGKLLDLKMCSFLPRHNHNLANEFRCYVNYESRLLS.

Belongs to the class I-like SAM-binding methyltransferase superfamily. EFM5 family.

The protein localises to the cytoplasm. The catalysed reaction is L-lysyl-[protein] + 3 S-adenosyl-L-methionine = N(6),N(6),N(6)-trimethyl-L-lysyl-[protein] + 3 S-adenosyl-L-homocysteine + 3 H(+). In terms of biological role, protein-lysine methyltransferase that selectively catalyzes the trimethylation of EEF1A at 'Lys-79'. This Danio rerio (Zebrafish) protein is EEF1A lysine methyltransferase 1.